The primary structure comprises 412 residues: ATP phosphoribosyltransferase regulatory subunit (412 aa).

It belongs to the class-II aminoacyl-tRNA synthetase family. HisZ subfamily. Heteromultimer composed of HisG and HisZ subunits.

The protein resides in the cytoplasm. The protein operates within amino-acid biosynthesis; L-histidine biosynthesis; L-histidine from 5-phospho-alpha-D-ribose 1-diphosphate: step 1/9. Functionally, required for the first step of histidine biosynthesis. May allow the feedback regulation of ATP phosphoribosyltransferase activity by histidine. This Dehalococcoides mccartyi (strain ATCC BAA-2266 / KCTC 15142 / 195) (Dehalococcoides ethenogenes (strain 195)) protein is ATP phosphoribosyltransferase regulatory subunit.